The following is a 565-amino-acid chain: NAD-dependent malic enzyme (565 aa).

The active-site Proton donor is Tyr104. Arg157 is an NAD(+) binding site. Lys175 acts as the Proton acceptor in catalysis. A divalent metal cation is bound by residues Glu246, Asp247, and Asp270. Positions 270 and 418 each coordinate NAD(+).

Belongs to the malic enzymes family. As to quaternary structure, homotetramer. It depends on Mg(2+) as a cofactor. Mn(2+) serves as cofactor.

It carries out the reaction (S)-malate + NAD(+) = pyruvate + CO2 + NADH. It catalyses the reaction oxaloacetate + H(+) = pyruvate + CO2. The polypeptide is NAD-dependent malic enzyme (Serratia proteamaculans (strain 568)).